We begin with the raw amino-acid sequence, 127 residues long: Putative pre-16S rRNA nuclease (127 aa).

Belongs to the YqgF nuclease family.

Its subcellular location is the cytoplasm. In terms of biological role, could be a nuclease involved in processing of the 5'-end of pre-16S rRNA. The sequence is that of Putative pre-16S rRNA nuclease from Campylobacter jejuni subsp. jejuni serotype O:6 (strain 81116 / NCTC 11828).